Consider the following 44-residue polypeptide: Cytochrome b559 subunit beta (44 aa).

A helical membrane pass occupies residues 19–35 (WLSVHALGVPSVFFLGA). Histidine 23 is a binding site for heme.

The protein belongs to the PsbE/PsbF family. As to quaternary structure, heterodimer of an alpha subunit and a beta subunit. PSII is composed of 1 copy each of membrane proteins PsbA, PsbB, PsbC, PsbD, PsbE, PsbF, PsbH, PsbI, PsbJ, PsbK, PsbL, PsbM, PsbT, PsbX, PsbY, PsbZ, Psb30/Ycf12, peripheral proteins PsbO, CyanoQ (PsbQ), PsbU, PsbV and a large number of cofactors. It forms dimeric complexes. It depends on heme b as a cofactor.

It localises to the cellular thylakoid membrane. This b-type cytochrome is tightly associated with the reaction center of photosystem II (PSII). PSII is a light-driven water:plastoquinone oxidoreductase that uses light energy to abstract electrons from H(2)O, generating O(2) and a proton gradient subsequently used for ATP formation. It consists of a core antenna complex that captures photons, and an electron transfer chain that converts photonic excitation into a charge separation. This Synechococcus elongatus (strain ATCC 33912 / PCC 7942 / FACHB-805) (Anacystis nidulans R2) protein is Cytochrome b559 subunit beta.